Reading from the N-terminus, the 105-residue chain is U2-lycotoxin-Ls1b (105 aa).

The signal sequence occupies residues 1–17 (MIKYVLISALLVVAVYS). Positions 18 to 41 (FTIEDNEDALLEEAEDELDTEEER) are excised as a propeptide. Disulfide bonds link C51/C67, C58/C97, C60/C83, and C69/C81.

Belongs to the neurotoxin 04 (omega-agtx) family. 01 (type I omega-agtx) subfamily. As to expression, expressed by the venom gland.

Its subcellular location is the secreted. Its function is as follows. Insecticidal to house crickets. It induces an excitatory slow-onset impact that leads to irreversible spastic paralysis. It also modifies human voltage-gated potassium channel Kv1.5/KCNA5. Most likely, it binds to the voltage-sensing domain of the channel, suggesting it does not block the pore but prevents its opening at physiological membrane potentials. The recombinant peptide binds to the channel in an irreversible manner and slows down the hKv1.5 current activation kinetics. It is not toxic to mice, when intracranially injected (at 0.5 ug/g mouse). The sequence is that of U2-lycotoxin-Ls1b from Lycosa singoriensis (Wolf spider).